Reading from the N-terminus, the 247-residue chain is Protein FAM133B (247 aa).

2 disordered regions span residues 19–38 (SRGPIQSSGPTIQDYLNRPR) and 70–247 (KKEL…PDSP). Residues 70 to 80 (KKELEKHREKL) are compositionally biased toward basic and acidic residues. Phosphoserine is present on Ser-82. Basic residues predominate over residues 89–102 (KKRQRKKKEKKKSG). Positions 103–119 (RYSSSSSSSSDSSSSSS) are enriched in low complexity. Basic residues predominate over residues 128-140 (QGKRRKKKKNRSH). Basic and acidic residues predominate over residues 165-176 (KDGTEKEKDIKG). A phosphoserine mark is found at Ser-191, Ser-192, Ser-194, and Ser-196. The span at 211–221 (SSEEREKATEK) shows a compositional bias: basic and acidic residues. The segment covering 222–239 (TKKKKKHKKHSKKKKKKA) has biased composition (basic residues).

The protein belongs to the FAM133 family.

This chain is Protein FAM133B (FAM133B), found in Homo sapiens (Human).